The primary structure comprises 215 residues: Thymidylate kinase (215 aa).

10-17 (GGEGVGKT) is an ATP binding site.

This sequence belongs to the thymidylate kinase family.

It carries out the reaction dTMP + ATP = dTDP + ADP. Phosphorylation of dTMP to form dTDP in both de novo and salvage pathways of dTTP synthesis. The protein is Thymidylate kinase of Bartonella henselae (strain ATCC 49882 / DSM 28221 / CCUG 30454 / Houston 1) (Rochalimaea henselae).